Here is a 196-residue protein sequence, read N- to C-terminus: SPRY domain-containing protein 7 (196 aa).

The 184-residue stretch at 1-184 folds into the B30.2/SPRY domain; sequence MAASVFCCLR…FSEFYHTPPP (184 aa).

In Gallus gallus (Chicken), this protein is SPRY domain-containing protein 7 (SPRYD7).